Consider the following 478-residue polypeptide: Solute carrier family 49 member 4 (478 aa).

Positions 1–27 (MGSGWSSEEEERQPLLGPGLGPAPGAT) are disordered. Residues 1–51 (MGSGWSSEEEERQPLLGPGLGPAPGATRRGREAAAVLPAAGPSPGRVYGRR) lie on the Cytoplasmic side of the membrane. Residues 15–16 (LL) carry the Di-leucine motif; mediates lysosomal localization motif. Residues 52–72 (WLVLLLFSLLAFAQGLVWNTW) traverse the membrane as a helical segment. The Lumenal portion of the chain corresponds to 73-89 (GPIQNSARQAYSFTGWD). A helical transmembrane segment spans residues 90–110 (IALLVLWGPIGFLPCFAFMWL). The Cytoplasmic segment spans residues 111-117 (LDKRGLR). A helical membrane pass occupies residues 118 to 138 (ITVLLTSFLMVLGTGLRCIPV). The Lumenal segment spans residues 139–152 (SDLTLKKRLIHGGQ). The chain crosses the membrane as a helical span at residues 153 to 173 (ILNGLAGPTVMNAAPFLSTTW). Residues 174 to 184 (FSADERATATA) lie on the Cytoplasmic side of the membrane. A helical membrane pass occupies residues 185–205 (IASMLSYLGGACAFLVGPLVV). The Lumenal portion of the chain corresponds to 206 to 229 (PAPNGTAPLLTAESSRDHIKDRIE). Residue Asn-209 is glycosylated (N-linked (GlcNAc...) asparagine). The helical transmembrane segment at 230-250 (TVLYAEFGVVCLIFSATLAYF) threads the bilayer. The Cytoplasmic portion of the chain corresponds to 251–281 (PPRPPLPPSVAAASQRLSYRRSFCRLLSNLR). A helical transmembrane segment spans residues 282 to 302 (FLMIALAYAIPLGVFAGWSGV). The Lumenal segment spans residues 303–314 (LDLILTPVHVSQ). A helical transmembrane segment spans residues 315–335 (VDAGWIGFWSIVGGCVVGIAM). Topologically, residues 336 to 347 (ARFADFIRGMLK) are cytoplasmic. A helical transmembrane segment spans residues 348–368 (LILLLLFSGATLSSTWFTLTC). Residues 369–384 (LNSVTHLPLTTVTLYA) lie on the Lumenal side of the membrane. The chain crosses the membrane as a helical span at residues 385 to 405 (SCILLGVFLNSSVPIFFELFV). Over 406 to 414 (ETVYPVPEG) the chain is Cytoplasmic. Residues 415–435 (ITCGVVTFLSNMFMGVLLFFV) form a helical membrane-spanning segment. Residues 436-442 (TFYHTEL) are Lumenal-facing. Residues 443 to 463 (SWFNWCLPGSCLLSLLLILCF) form a helical membrane-spanning segment. The Cytoplasmic segment spans residues 464–478 (RESYDRLYLDVVVSV).

It belongs to the major facilitator superfamily. Post-translationally, cleaved in lysosomes by cathepsin L between Leu-214 and Ala-261, generating a N-glycosylated N-terminal and a non-glycosylated C-terminal fragment.

The protein localises to the lysosome membrane. The enzyme catalyses pyridoxine(out) + n H(+)(out) = pyridoxine(in) + n H(+)(in). Its function is as follows. Mediates H(+)-dependent pyridoxine transport. The chain is Solute carrier family 49 member 4 (Slc49a4) from Rattus norvegicus (Rat).